A 196-amino-acid chain; its full sequence is GTP cyclohydrolase-2 (196 aa).

49-53 (RVHSE) serves as a coordination point for GTP. Zn(2+) contacts are provided by cysteine 54, cysteine 65, and cysteine 67. Residues glutamine 70, 92-94 (EGR), and threonine 114 contribute to the GTP site. Residue aspartate 126 is the Proton acceptor of the active site. The active-site Nucleophile is the arginine 128. 2 residues coordinate GTP: threonine 149 and lysine 154.

It belongs to the GTP cyclohydrolase II family. As to quaternary structure, homodimer. It depends on Zn(2+) as a cofactor.

The catalysed reaction is GTP + 4 H2O = 2,5-diamino-6-hydroxy-4-(5-phosphoribosylamino)-pyrimidine + formate + 2 phosphate + 3 H(+). Its pathway is cofactor biosynthesis; riboflavin biosynthesis; 5-amino-6-(D-ribitylamino)uracil from GTP: step 1/4. Catalyzes the conversion of GTP to 2,5-diamino-6-ribosylamino-4(3H)-pyrimidinone 5'-phosphate (DARP), formate and pyrophosphate. In Escherichia coli O127:H6 (strain E2348/69 / EPEC), this protein is GTP cyclohydrolase-2.